A 70-amino-acid polypeptide reads, in one-letter code: Large ribosomal subunit protein bL31c (70 aa).

Belongs to the bacterial ribosomal protein bL31 family. Type A subfamily. Part of the 50S ribosomal subunit.

The protein resides in the plastid. It is found in the chloroplast. Its function is as follows. Binds the 23S rRNA. This Pyropia yezoensis (Susabi-nori) protein is Large ribosomal subunit protein bL31c.